The sequence spans 509 residues: Maturase K (509 aa).

Belongs to the intron maturase 2 family. MatK subfamily.

Its subcellular location is the plastid. The protein localises to the chloroplast. Functionally, usually encoded in the trnK tRNA gene intron. Probably assists in splicing its own and other chloroplast group II introns. The sequence is that of Maturase K from Portulaca oleracea (Common purslane).